A 100-amino-acid chain; its full sequence is Urease subunit gamma (100 aa).

The protein belongs to the urease gamma subunit family. Heterotrimer of UreA (gamma), UreB (beta) and UreC (alpha) subunits. Three heterotrimers associate to form the active enzyme.

It localises to the cytoplasm. The catalysed reaction is urea + 2 H2O + H(+) = hydrogencarbonate + 2 NH4(+). It functions in the pathway nitrogen metabolism; urea degradation; CO(2) and NH(3) from urea (urease route): step 1/1. The polypeptide is Urease subunit gamma (Synechococcus sp. (strain CC9902)).